Here is a 351-residue protein sequence, read N- to C-terminus: Histidinol-phosphate aminotransferase 1 (351 aa).

At lysine 210 the chain carries N6-(pyridoxal phosphate)lysine.

Belongs to the class-II pyridoxal-phosphate-dependent aminotransferase family. Histidinol-phosphate aminotransferase subfamily. As to quaternary structure, homodimer. Requires pyridoxal 5'-phosphate as cofactor.

It carries out the reaction L-histidinol phosphate + 2-oxoglutarate = 3-(imidazol-4-yl)-2-oxopropyl phosphate + L-glutamate. Its pathway is amino-acid biosynthesis; L-histidine biosynthesis; L-histidine from 5-phospho-alpha-D-ribose 1-diphosphate: step 7/9. In Pseudomonas aeruginosa (strain ATCC 15692 / DSM 22644 / CIP 104116 / JCM 14847 / LMG 12228 / 1C / PRS 101 / PAO1), this protein is Histidinol-phosphate aminotransferase 1 (hisC1).